Here is a 104-residue protein sequence, read N- to C-terminus: ADIVMTQTPASVSEPVGGTVTIKCQASQSIFBBLAWYQKPGZPPKGLLYTBYTLASGVSSRFSGGGSGTBFTLTISDLECABAATYYCEXTGVSZBXBKGFGGG.

Residues 1 to 24 (ADIVMTQTPASVSEPVGGTVTIKC) form a framework-1 region. The interval 25 to 35 (QASQSIFBBLA) is complementarity-determining-1. The segment at 36-49 (WYQKPGZPPKGLLY) is framework-2. Residues 50 to 56 (TBYTLAS) are complementarity-determining-2. The interval 57–88 (GVSSRFSGGGSGTBFTLTISDLECABAATYYC) is framework-3. The complementarity-determining-3 stretch occupies residues 89-100 (EXTGVSZBXBKG). The tract at residues 101-104 (FGGG) is framework-4.

In Oryctolagus cuniculus (Rabbit), this protein is Ig kappa chain V region XP-1.